Reading from the N-terminus, the 454-residue chain is Chromosomal replication initiator protein DnaA (454 aa).

The domain I, interacts with DnaA modulators stretch occupies residues 1 to 79; that stretch reads MSLCLWKQCL…NSPFIKFKVY (79 aa). The domain II stretch occupies residues 79–117; that stretch reads YQTSKEKKFKKNILQKIQNLNAKPIWDKIPIFKKSSHRS. A domain III, AAA+ region region spans residues 118-334; it reads NINKKHSFEN…GALNRVIVNA (217 aa). 4 residues coordinate ATP: Gly162, Gly164, Lys165, and Thr166. The domain IV, binds dsDNA stretch occupies residues 335–454; it reads NFTHRSITVE…FSNLIRTLSV (120 aa).

The protein belongs to the DnaA family. As to quaternary structure, oligomerizes as a right-handed, spiral filament on DNA at oriC.

Its subcellular location is the cytoplasm. Plays an essential role in the initiation and regulation of chromosomal replication. ATP-DnaA binds to the origin of replication (oriC) to initiate formation of the DNA replication initiation complex once per cell cycle. Binds the DnaA box (a 9 base pair repeat at the origin) and separates the double-stranded (ds)DNA. Forms a right-handed helical filament on oriC DNA; dsDNA binds to the exterior of the filament while single-stranded (ss)DNA is stabiized in the filament's interior. The ATP-DnaA-oriC complex binds and stabilizes one strand of the AT-rich DNA unwinding element (DUE), permitting loading of DNA polymerase. After initiation quickly degrades to an ADP-DnaA complex that is not apt for DNA replication. Binds acidic phospholipids. The polypeptide is Chromosomal replication initiator protein DnaA (Buchnera aphidicola subsp. Schizaphis graminum (strain Sg)).